The sequence spans 218 residues: Insulin-induced gene 2 protein (218 aa).

The Cytoplasmic portion of the chain corresponds to Met1 to Leu21. Residues Leu22 to Val44 traverse the membrane as a helical segment. At Gln45–Ala63 the chain is on the lumenal side. The chain crosses the membrane as a helical span at residues Trp64 to Tyr81. Over Pro82–Arg96 the chain is Cytoplasmic. Residues Glu97 to Asp119 traverse the membrane as a helical segment. Topologically, residues Phe120–Asn122 are lumenal. A helical transmembrane segment spans residues Asn123 to Phe141. At Asp142–Ser146 the chain is on the cytoplasmic side. The helical transmembrane segment at Gly147–Asn168 threads the bilayer. Residues Gly169–Arg182 lie on the Lumenal side of the membrane. A helical membrane pass occupies residues Ser183–Gly200. At Arg201–Asp218 the chain is on the cytoplasmic side. The KxHxx motif lies at Val212–Asp218.

Belongs to the INSIG family. In terms of assembly, interacts with scap; interaction is direct and only takes place in the presence of sterols; it prevents interaction between scap and the coat protein complex II (COPII). Associates with the SCAP-SREBP complex; association is mediated via its interaction with scap and only takes place in the presence of sterols.

The protein resides in the endoplasmic reticulum membrane. Functionally, oxysterol-binding protein that mediates feedback control of cholesterol synthesis by controlling both endoplasmic reticulum to Golgi transport of scap and degradation of hmgcr. Acts as a negative regulator of cholesterol biosynthesis by mediating the retention of the SCAP-SREBP complex in the endoplasmic reticulum, thereby blocking the processing of sterol regulatory element-binding proteins (SREBPs). Binds oxysterol, including 22-hydroxycholesterol, 24-hydroxycholesterol, 25-hydroxycholesterol and 27-hydroxycholesterol, regulating interaction with scap and retention of the SCAP-SREBP complex in the endoplasmic reticulum. In presence of oxysterol, interacts with scap, retaining the SCAP-SREBP complex in the endoplasmic reticulum, thereby preventing scap from escorting SREBPs to the Golgi. Sterol deprivation reduce oxysterol-binding, disrupting the interaction between insig2 and scap, thereby promoting Golgi transport of the SCAP-SREBP complex, followed by processing and nuclear translocation of SREBPs. Also regulates cholesterol synthesis by regulating degradation of hmgcr. This is Insulin-induced gene 2 protein from Xenopus tropicalis (Western clawed frog).